A 375-amino-acid polypeptide reads, in one-letter code: Secreted LysM effector Vd4LysM (375 aa).

Residues 1 to 24 (MPSVTISSTMLAGLLLMLVPASSA) form the signal peptide. Residues 57 to 104 (SWWWDNEGQIPCANMPAEWGITMQDFLRWNPSITSSCGNFLNGRSYCV) enclose the LysM 1 domain. Residues 108–139 (GEEPPVPGTPTTTTAPATTTKPSNGITTPQPI) form a disordered region. Residues 116–129 (TPTTTTAPATTTKP) are compositionally biased toward low complexity. The LysM 2 domain occupies 149-195 (KFHYISEGDRCQDILSYQKITLADFFKWNPAVKSDCSGLWSKTNACV). The segment covering 206-217 (TTTTKPATPTTP) has biased composition (low complexity). Residues 206–225 (TTTTKPATPTTPSNGITTPQ) are disordered. One can recognise a LysM 3 domain in the interval 237–283 (KFHYISEGDRCQDILSYQKITQADFFKWNPAVKSDCSGLWSKTHACV). Positions 287-317 (GGQAPPPTPTTTKPTTTKPPGNGVTTPTPTQ) are disordered. Residues 296 to 317 (TTTKPTTTKPPGNGVTTPTPTQ) are compositionally biased toward low complexity. The LysM 4 domain maps to 326–372 (KFHFVSPGNTCQQIVSYQKITMANFVKWNSGAGSGCNNLWGNTHACV).

The protein belongs to the secreted LysM effector family.

In terms of biological role, might have a role in sequestration of chitin oligosaccharides (breakdown products of fungal cell walls that are released during invasion and act as triggers of host immunity) to dampen host defense. Does not play an important role during host colonization. This chain is Secreted LysM effector Vd4LysM, found in Verticillium dahliae (strain VdLs.17 / ATCC MYA-4575 / FGSC 10137) (Verticillium wilt).